Here is a 348-residue protein sequence, read N- to C-terminus: Fructose-1,6-bisphosphatase class 1 (348 aa).

4 residues coordinate Mg(2+): Glu92, Asp111, Leu113, and Asp114. Substrate contacts are provided by residues Asp114 to Ser117 and Asn204. Residue Glu276 participates in Mg(2+) binding.

Belongs to the FBPase class 1 family. Homotetramer. Requires Mg(2+) as cofactor.

It is found in the cytoplasm. It catalyses the reaction beta-D-fructose 1,6-bisphosphate + H2O = beta-D-fructose 6-phosphate + phosphate. The protein operates within carbohydrate biosynthesis; gluconeogenesis. This Methylorubrum populi (strain ATCC BAA-705 / NCIMB 13946 / BJ001) (Methylobacterium populi) protein is Fructose-1,6-bisphosphatase class 1.